The following is a 546-amino-acid chain: Chaperonin GroEL (546 aa).

Residues threonine 29 to proline 32, lysine 50, aspartate 86 to threonine 90, glycine 412, asparagine 476 to alanine 478, and aspartate 492 each bind ATP.

Belongs to the chaperonin (HSP60) family. As to quaternary structure, forms a cylinder of 14 subunits composed of two heptameric rings stacked back-to-back. Interacts with the co-chaperonin GroES.

The protein resides in the cytoplasm. The catalysed reaction is ATP + H2O + a folded polypeptide = ADP + phosphate + an unfolded polypeptide.. Functionally, together with its co-chaperonin GroES, plays an essential role in assisting protein folding. The GroEL-GroES system forms a nano-cage that allows encapsulation of the non-native substrate proteins and provides a physical environment optimized to promote and accelerate protein folding. In terms of biological role, may play a protective role against the defense mechanisms generated by the infected macrophages. The protein is Chaperonin GroEL of Legionella micdadei (Tatlockia micdadei).